Reading from the N-terminus, the 125-residue chain is MINQTAMLLTRSLRPRSAFVGAGLGYPRRFLTTVESPLHEFFVVIFNKRNAKESDLAPAPQTIKFKEQDVILTFAGDMMASAAPATDSAPERTLGACFRVPGTQRAESVAGDSRPREHRQGAVGY.

The disordered stretch occupies residues Gln104–Tyr125. Residues Ser113 to Tyr125 are compositionally biased toward basic and acidic residues.

It functions in the pathway secondary metabolite biosynthesis. In terms of biological role, part of the gene cluster that mediates the biosynthesis of aspercryptins, linear lipopeptides built from six amino acids including 2 highly unusual and nonproteogenic amino acids, 2-amino-octanoic acid (2aoa) and 2-amino-dodecanol (2adol). The core structure of aspercryptins is as follows: Ser/Ala-Thr-Ile/Val-2aoa-Asn-2adol. The first step of aspercryptin biosynthesis is the generation of the fatty acid precursors, octanoic and dodecanoic acids, by the FAS subunits atnF and atnM. The fatty acid precursors are likely transformed into the corresponding alpha-amino fatty acids in three steps. First, they are hydroxylated by the cytochrome P450 monooxygenase atnE, then oxidized to the corresponding alpha-keto acids by the NAD(P)-dependent oxidoreductase atnD, and finally converted to the alpha-amino fatty acids by the PLP-dependent aminotransferases atnH or atnJ. the alpha-amino fatty acids, 2-amino-octanoic and 2-amino-dodecanoic acids, are recognized, activated, and covalently tethered to the NRPS atnA by its fourth and sixth adenylation domains. The second module of atnA is the Thr module and contains an epimerase (E) domain responsible for the epimerization of Thr to D-allo-Thr. Additionally, despite atnA having only one epimerase domain, the first amino acid of aspercryptin A1 is D-Ser, suggesting that serine is either loaded directly as D-Ser on the first module or that the epimerase domain in the threonine module epimerizes both L-Ser and L-Thr. After condensation of the hexapeptide of aspercryptin, the C-terminal reductase (TE) domain might be involved in the reductive release and production of the aldehyde hexapeptide. Further reduction would generate aspercryptins. The variety of aspercryptins produced reflects the flexibility of the atnA NRPS, allowing incorporation of alanine instead of serine, valine for isoleucine, and a C10 fatty amino alcohol instead of the C12 version. AtnB seems to be involved in the selectivity for Ile versus Val by the third module. Moreover, type B, C and D aspercryptins have an additional N-terminal cichorine, acetyl and propionyl group respectively. This is Aspercryptin biosynthesis cluster protein K from Emericella nidulans (strain FGSC A4 / ATCC 38163 / CBS 112.46 / NRRL 194 / M139) (Aspergillus nidulans).